Consider the following 393-residue polypeptide: Phosphoglycerate kinase (393 aa).

Substrate contacts are provided by residues 21 to 23 (DLN), Arg36, 59 to 62 (HLGR), Arg114, and Arg147. ATP is bound by residues Lys198, Glu320, and 346-349 (GGDT).

This sequence belongs to the phosphoglycerate kinase family. Monomer.

Its subcellular location is the cytoplasm. It carries out the reaction (2R)-3-phosphoglycerate + ATP = (2R)-3-phospho-glyceroyl phosphate + ADP. It functions in the pathway carbohydrate degradation; glycolysis; pyruvate from D-glyceraldehyde 3-phosphate: step 2/5. In Methylobacillus flagellatus (strain ATCC 51484 / DSM 6875 / VKM B-1610 / KT), this protein is Phosphoglycerate kinase.